A 381-amino-acid chain; its full sequence is Erythronate-4-phosphate dehydrogenase (381 aa).

Substrate-binding residues include S45 and T67. NAD(+) is bound by residues Q127 to V128, D147, and T176. Residue R209 is part of the active site. Position 233 (D233) interacts with NAD(+). Residue E238 is part of the active site. H255 (proton donor) is an active-site residue. G258 contacts NAD(+). Y259 is a binding site for substrate.

This sequence belongs to the D-isomer specific 2-hydroxyacid dehydrogenase family. PdxB subfamily. Homodimer.

It localises to the cytoplasm. It catalyses the reaction 4-phospho-D-erythronate + NAD(+) = (R)-3-hydroxy-2-oxo-4-phosphooxybutanoate + NADH + H(+). It participates in cofactor biosynthesis; pyridoxine 5'-phosphate biosynthesis; pyridoxine 5'-phosphate from D-erythrose 4-phosphate: step 2/5. Its function is as follows. Catalyzes the oxidation of erythronate-4-phosphate to 3-hydroxy-2-oxo-4-phosphonooxybutanoate. The polypeptide is Erythronate-4-phosphate dehydrogenase (Vibrio cholerae serotype O1 (strain ATCC 39315 / El Tor Inaba N16961)).